Here is a 346-residue protein sequence, read N- to C-terminus: GTPase Obg (346 aa).

The 159-residue stretch at Met-1–Ile-159 folds into the Obg domain. The region spanning Ala-160–Gly-327 is the OBG-type G domain. GTP-binding positions include Gly-166–Ser-173, Phe-191–His-195, Asp-212–Gly-215, Asn-279–Asp-282, and Ser-308–Ala-310. Mg(2+) contacts are provided by Ser-173 and Thr-193.

It belongs to the TRAFAC class OBG-HflX-like GTPase superfamily. OBG GTPase family. In terms of assembly, monomer. It depends on Mg(2+) as a cofactor.

It localises to the cytoplasm. Functionally, an essential GTPase which binds GTP, GDP and possibly (p)ppGpp with moderate affinity, with high nucleotide exchange rates and a fairly low GTP hydrolysis rate. Plays a role in control of the cell cycle, stress response, ribosome biogenesis and in those bacteria that undergo differentiation, in morphogenesis control. The chain is GTPase Obg from Bradyrhizobium diazoefficiens (strain JCM 10833 / BCRC 13528 / IAM 13628 / NBRC 14792 / USDA 110).